Reading from the N-terminus, the 298-residue chain is N-acetylmuramic acid 6-phosphate etherase (298 aa).

Positions 55 to 218 (IHAQVSGGGR…STGLMIKSGK (164 aa)) constitute an SIS domain. The Proton donor role is filled by E83. The active site involves E114.

It belongs to the GCKR-like family. MurNAc-6-P etherase subfamily. As to quaternary structure, homodimer.

The enzyme catalyses N-acetyl-D-muramate 6-phosphate + H2O = N-acetyl-D-glucosamine 6-phosphate + (R)-lactate. Its pathway is amino-sugar metabolism; 1,6-anhydro-N-acetylmuramate degradation. The protein operates within amino-sugar metabolism; N-acetylmuramate degradation. It functions in the pathway cell wall biogenesis; peptidoglycan recycling. Its function is as follows. Specifically catalyzes the cleavage of the D-lactyl ether substituent of MurNAc 6-phosphate, producing GlcNAc 6-phosphate and D-lactate. Together with AnmK, is also required for the utilization of anhydro-N-acetylmuramic acid (anhMurNAc) either imported from the medium or derived from its own cell wall murein, and thus plays a role in cell wall recycling. This Escherichia fergusonii (strain ATCC 35469 / DSM 13698 / CCUG 18766 / IAM 14443 / JCM 21226 / LMG 7866 / NBRC 102419 / NCTC 12128 / CDC 0568-73) protein is N-acetylmuramic acid 6-phosphate etherase.